The primary structure comprises 420 residues: Trophoblast glycoprotein (420 aa).

The N-terminal stretch at 1–31 is a signal peptide; the sequence is MPGGCSRGPAAGDGRLRLARLALVLLGWVSS. The Extracellular portion of the chain corresponds to 32-355; that stretch reads SSPTSSASSF…PILPPSLQTS (324 aa). Positions 53–91 constitute an LRRNT domain; it reads SAQPPLPDQCPALCECSEAARTVKCVNRNLTEVPTDLPA. 2 disulfide bridges follow: Cys-62–Cys-68 and Cys-66–Cys-77. Residue Asn-81 is glycosylated (N-linked (GlcNAc...) asparagine). LRR repeat units lie at residues 92-113, 116-139, 141-163, 172-204, 209-232, 233-255, and 256-275; these read YVRNLFLTGNQLAVLPAGAFAR, PLAELAALNLSGSRLDEVRAGAFE, LPSLRQLDLSHNPLADLSPFAFS, PSPLVELILNHIVPPEDERQNRSFEGMVVAALL, LQGLRRLELASNHFLYLPRDVLAQ, LPSLRHLDLSNNSLVSLTYVSFR, and NLTHLESLHLEDNALKVLHN. Asn-124 carries N-linked (GlcNAc...) asparagine glycosylation. Asn-275 carries an N-linked (GlcNAc...) asparagine glycan. Residues 283–346 enclose the LRRCT domain; it reads GLPHIRVFLD…LNSADLDCDP (64 aa). Disulfide bonds link Cys-298–Cys-323 and Cys-300–Cys-344. A helical membrane pass occupies residues 356-376; the sequence is YVFLGIVLALIGAIFLLVLYL. The Cytoplasmic portion of the chain corresponds to 377 to 420; that stretch reads NRKGIKKWMHNIRDACRDHMEGYHYRYEINADPRLTNLSSNSDV. Ser-418 is subject to Phosphoserine.

In terms of processing, highly glycosylated. Expressed by all types of trophoblasts as early as 9 weeks of development. Specific for trophoblastic cells except for amniotic epithelium. In adult tissues, the expression is limited to a few epithelial cell types but is found on a variety of carcinoma.

The protein localises to the cell membrane. May function as an inhibitor of Wnt/beta-catenin signaling by indirectly interacting with LRP6 and blocking Wnt3a-dependent LRP6 internalization. This is Trophoblast glycoprotein (TPBG) from Homo sapiens (Human).